The following is a 487-amino-acid chain: N-succinylglutamate 5-semialdehyde dehydrogenase (487 aa).

221–226 (GSSDTG) is an NAD(+) binding site. Catalysis depends on residues Glu-244 and Cys-278.

This sequence belongs to the aldehyde dehydrogenase family. AstD subfamily.

It catalyses the reaction N-succinyl-L-glutamate 5-semialdehyde + NAD(+) + H2O = N-succinyl-L-glutamate + NADH + 2 H(+). It functions in the pathway amino-acid degradation; L-arginine degradation via AST pathway; L-glutamate and succinate from L-arginine: step 4/5. In terms of biological role, catalyzes the NAD-dependent reduction of succinylglutamate semialdehyde into succinylglutamate. The chain is N-succinylglutamate 5-semialdehyde dehydrogenase from Burkholderia thailandensis (strain ATCC 700388 / DSM 13276 / CCUG 48851 / CIP 106301 / E264).